The following is a 274-amino-acid chain: NH(3)-dependent NAD(+) synthetase (274 aa).

Residue 46–53 (GISGGQDS) coordinates ATP. Asp52 is a Mg(2+) binding site. Arg140 contributes to the deamido-NAD(+) binding site. Thr160 contributes to the ATP binding site. Glu165 provides a ligand contact to Mg(2+). Deamido-NAD(+) contacts are provided by Lys173 and Asp180. Lys189 and Thr211 together coordinate ATP. 260 to 261 (HK) contacts deamido-NAD(+).

It belongs to the NAD synthetase family. In terms of assembly, homodimer.

It catalyses the reaction deamido-NAD(+) + NH4(+) + ATP = AMP + diphosphate + NAD(+) + H(+). It functions in the pathway cofactor biosynthesis; NAD(+) biosynthesis; NAD(+) from deamido-NAD(+) (ammonia route): step 1/1. Its function is as follows. Catalyzes the ATP-dependent amidation of deamido-NAD to form NAD. Uses ammonia as a nitrogen source. This Lysinibacillus sphaericus (strain C3-41) protein is NH(3)-dependent NAD(+) synthetase.